Reading from the N-terminus, the 135-residue chain is MLSPKRTRFRKQHRGRMKGKSYRGNHISFGRYALQAVEPAWITARQIEAGRRAISRYARRGGKIWVRLFPDKRVTLRPAETRMGSGKGSPEYWVSVVKPGRILYEIGGVSETVARTAMLLAASKMPIRTQFIIEE.

The segment at 1-20 (MLSPKRTRFRKQHRGRMKGK) is disordered.

This sequence belongs to the universal ribosomal protein uL16 family. Part of the 50S ribosomal subunit.

Its subcellular location is the plastid. The protein resides in the chloroplast. The chain is Large ribosomal subunit protein uL16c from Landoltia punctata (Dotted duckmeat).